We begin with the raw amino-acid sequence, 513 residues long: L-arabinose transport ATP-binding protein AraG (513 aa).

ABC transporter domains lie at 6-243 and 264-508; these read LEMR…GMVG and VKNW…TKTA. 38 to 45 provides a ligand contact to ATP; sequence GENGAGKS.

This sequence belongs to the ABC transporter superfamily.

It localises to the cell membrane. The catalysed reaction is L-arabinose(out) + ATP + H2O = L-arabinose(in) + ADP + phosphate + H(+). Its function is as follows. Part of the binding-protein-dependent transport system for L-arabinose. Probably responsible for energy coupling to the transport system. In Geobacillus stearothermophilus (Bacillus stearothermophilus), this protein is L-arabinose transport ATP-binding protein AraG (araG).